Here is a 364-residue protein sequence, read N- to C-terminus: GDP-perosamine synthase (364 aa).

Lysine 183 bears the N6-(pyridoxal phosphate)lysine mark.

It belongs to the DegT/DnrJ/EryC1 family. Homodecamer. Pyridoxal 5'-phosphate is required as a cofactor.

It carries out the reaction GDP-alpha-D-perosamine + 2-oxoglutarate = GDP-4-dehydro-alpha-D-rhamnose + L-glutamate. It participates in bacterial outer membrane biogenesis; LPS O-antigen biosynthesis. With respect to regulation, divalent ions have no significant effect on activity. In terms of biological role, catalyzes the synthesis of GDP-perosamine from GDP-4-keto-6-deoxy-D-mannose and L-glutamate. Can use only L-glutamate as amino donor. The sequence is that of GDP-perosamine synthase from Escherichia coli O157:H7.